The chain runs to 272 residues: Eukaryotic translation initiation factor 3 subunit G (272 aa).

2 disordered regions span residues 1–28 and 157–188; these read MPAL…PTEI and APTT…GRDD. Positions 190 to 268 constitute an RRM domain; the sequence is TAIRISNLSE…LILNVEWSKP (79 aa).

It belongs to the eIF-3 subunit G family. As to quaternary structure, component of the eukaryotic translation initiation factor 3 (eIF-3) complex.

It is found in the cytoplasm. In terms of biological role, RNA-binding component of the eukaryotic translation initiation factor 3 (eIF-3) complex, which is involved in protein synthesis of a specialized repertoire of mRNAs and, together with other initiation factors, stimulates binding of mRNA and methionyl-tRNAi to the 40S ribosome. The eIF-3 complex specifically targets and initiates translation of a subset of mRNAs involved in cell proliferation. This subunit can bind 18S rRNA. In Aedes aegypti (Yellowfever mosquito), this protein is Eukaryotic translation initiation factor 3 subunit G.